The following is a 390-amino-acid chain: 3-ketoacyl-CoA thiolase (390 aa).

Cysteine 95 functions as the Acyl-thioester intermediate in the catalytic mechanism. Residues histidine 346 and cysteine 376 each act as proton acceptor in the active site.

It belongs to the thiolase-like superfamily. Thiolase family. Heterotetramer of two alpha chains (FadB) and two beta chains (FadA).

It is found in the cytoplasm. The catalysed reaction is an acyl-CoA + acetyl-CoA = a 3-oxoacyl-CoA + CoA. It functions in the pathway lipid metabolism; fatty acid beta-oxidation. Its function is as follows. Catalyzes the final step of fatty acid oxidation in which acetyl-CoA is released and the CoA ester of a fatty acid two carbons shorter is formed. In Acinetobacter baumannii (strain AB307-0294), this protein is 3-ketoacyl-CoA thiolase.